We begin with the raw amino-acid sequence, 85 residues long: MKTLLLSLVVVTFVCLDLAHTRTCYSCTENICLQHEQCQDGQDVCYKRWNTTYLILTDVVRGCAKTCPTPIEEEEVYCCLKDNCN.

Positions 1–21 are cleaved as a signal peptide; the sequence is MKTLLLSLVVVTFVCLDLAHT. 5 disulfides stabilise this stretch: Cys-24/Cys-45, Cys-27/Cys-32, Cys-38/Cys-63, Cys-67/Cys-78, and Cys-79/Cys-84.

The protein belongs to the three-finger toxin family. Ancestral subfamily. Expressed by the venom gland.

It localises to the secreted. The polypeptide is Toxin 3FTx-Lei1 (Leioheterodon madagascariensis (Malagasy giant hognose snake)).